The primary structure comprises 160 residues: Cytosolic iron-sulfur assembly component 2A (160 aa).

Residues H89, H123, E150, and E153 each coordinate Zn(2+).

The protein belongs to the MIP18 family. In terms of assembly, monomer and homodimer. Component of the CIA complex. Interacts with CIAO1. Interacts with IREB2. Interacts with APAF1. As to expression, substantially enriched in macrophages.

Its subcellular location is the cytoplasm. Component of the cytosolic iron-sulfur protein assembly (CIA) complex, a multiprotein complex that mediates the incorporation of iron-sulfur cluster into extramitochondrial Fe/S proteins. As a CIA complex component and in collaboration with CIAO1 specifically matures ACO1 and stabilizes IREB2, connecting cytosolic iron-sulfur protein maturation with cellular iron regulation. May play a role in chromosome segregation through establishment of sister chromatid cohesion. May induce apoptosis in collaboration with APAF1. In Homo sapiens (Human), this protein is Cytosolic iron-sulfur assembly component 2A.